Consider the following 88-residue polypeptide: Small ribosomal subunit protein uS15 (88 aa).

The protein belongs to the universal ribosomal protein uS15 family. As to quaternary structure, part of the 30S ribosomal subunit. Forms a bridge to the 50S subunit in the 70S ribosome, contacting the 23S rRNA.

Functionally, one of the primary rRNA binding proteins, it binds directly to 16S rRNA where it helps nucleate assembly of the platform of the 30S subunit by binding and bridging several RNA helices of the 16S rRNA. In terms of biological role, forms an intersubunit bridge (bridge B4) with the 23S rRNA of the 50S subunit in the ribosome. This chain is Small ribosomal subunit protein uS15, found in Francisella tularensis subsp. novicida (strain U112).